The primary structure comprises 275 residues: Malonyl-[acyl-carrier protein] O-methyltransferase (275 aa).

This sequence belongs to the methyltransferase superfamily.

The enzyme catalyses malonyl-[ACP] + S-adenosyl-L-methionine = malonyl-[ACP] methyl ester + S-adenosyl-L-homocysteine. The protein operates within cofactor biosynthesis; biotin biosynthesis. In terms of biological role, converts the free carboxyl group of a malonyl-thioester to its methyl ester by transfer of a methyl group from S-adenosyl-L-methionine (SAM). It allows to synthesize pimeloyl-ACP via the fatty acid synthetic pathway. The protein is Malonyl-[acyl-carrier protein] O-methyltransferase of Methylococcus capsulatus (strain ATCC 33009 / NCIMB 11132 / Bath).